Consider the following 328-residue polypeptide: Tetraacyldisaccharide 4'-kinase (328 aa).

55–62 lines the ATP pocket; that stretch reads TAGGNGKT.

The protein belongs to the LpxK family.

It carries out the reaction a lipid A disaccharide + ATP = a lipid IVA + ADP + H(+). Its pathway is glycolipid biosynthesis; lipid IV(A) biosynthesis; lipid IV(A) from (3R)-3-hydroxytetradecanoyl-[acyl-carrier-protein] and UDP-N-acetyl-alpha-D-glucosamine: step 6/6. In terms of biological role, transfers the gamma-phosphate of ATP to the 4'-position of a tetraacyldisaccharide 1-phosphate intermediate (termed DS-1-P) to form tetraacyldisaccharide 1,4'-bis-phosphate (lipid IVA). In Escherichia fergusonii (strain ATCC 35469 / DSM 13698 / CCUG 18766 / IAM 14443 / JCM 21226 / LMG 7866 / NBRC 102419 / NCTC 12128 / CDC 0568-73), this protein is Tetraacyldisaccharide 4'-kinase.